The chain runs to 353 residues: Farnesyl pyrophosphate synthase (353 aa).

Residues lysine 57, arginine 60, and glutamine 96 each contribute to the isopentenyl diphosphate site. Residue lysine 57 is modified to N6-(2-hydroxyisobutyryl)lysine; alternate. Lysine 57 bears the N6-acetyllysine; alternate mark. Mg(2+) is bound by residues aspartate 103 and aspartate 107. Dimethylallyl diphosphate is bound at residue arginine 112. Position 113 (arginine 113) interacts with isopentenyl diphosphate. Residues lysine 200, threonine 201, glutamine 240, lysine 257, and lysine 266 each contribute to the dimethylallyl diphosphate site.

Belongs to the FPP/GGPP synthase family. In terms of assembly, homodimer. Interacts with RSAD2. Interacts with bovine leukemia virus (BLV) protein G4. Mg(2+) is required as a cofactor.

Its subcellular location is the cytoplasm. The catalysed reaction is isopentenyl diphosphate + dimethylallyl diphosphate = (2E)-geranyl diphosphate + diphosphate. It catalyses the reaction isopentenyl diphosphate + (2E)-geranyl diphosphate = (2E,6E)-farnesyl diphosphate + diphosphate. It participates in isoprenoid biosynthesis; farnesyl diphosphate biosynthesis; farnesyl diphosphate from geranyl diphosphate and isopentenyl diphosphate: step 1/1. It functions in the pathway isoprenoid biosynthesis; geranyl diphosphate biosynthesis; geranyl diphosphate from dimethylallyl diphosphate and isopentenyl diphosphate: step 1/1. With respect to regulation, inactivated by interferon-induced RSAD2. This inactivation may result of disruption of lipid rafts at the plasma membrane, and thus have an antiviral effect since many enveloped viruses need lipid rafts to bud efficiently out of the cell. Its function is as follows. Key enzyme in isoprenoid biosynthesis which catalyzes the formation of farnesyl diphosphate (FPP), a precursor for several classes of essential metabolites including sterols, dolichols, carotenoids, and ubiquinones. FPP also serves as substrate for protein farnesylation and geranylgeranylation. Catalyzes the sequential condensation of isopentenyl pyrophosphate with the allylic pyrophosphates, dimethylallyl pyrophosphate, and then with the resultant geranylpyrophosphate to the ultimate product farnesyl pyrophosphate. This is Farnesyl pyrophosphate synthase (FDPS) from Bos taurus (Bovine).